The following is a 78-amino-acid chain: Defensin-like protein 287 (78 aa).

The signal sequence occupies residues 1-24 (MNNLRVIMSVLLAVLVFTATVSES). 3 disulfide bridges follow: Cys39–Cys59, Cys45–Cys64, and Cys51–Cys66.

It belongs to the DEFL family.

It is found in the secreted. This Arabidopsis thaliana (Mouse-ear cress) protein is Defensin-like protein 287.